The chain runs to 386 residues: MIRESFLPPFRPCIGEEEINEVIDTLKSDWITMGPKTLKFEELFRNYIGSKFAISLNSCTAGLHLSLVALNIKDKDEVITTPYTFAATGNVIVHQRAKPVFVDIDKETYNINVEEIENAITERTKAIIPVHYAGHPCEMDEILKIARDYDLYVIEDAAHALGAEYKGKKIGTIGDTTSFSFYATKNITTGEGGMVTTDNEEIAEKIKILRLHGISRDAWKRYSSEGSWYYEIIECGYKYNMTDIQASIGIHQLKKAEIMRKRREEIAKIYNEEFENLEGLITPTIKKHVKHAWHLYPLLINIDRLKINRTKFIEELKKQNIGTSVHFIPLHLHPFYRKTFGYKKGDFPNAEWVYEREISLPIYPKMTDDDVIDVVNAVKKIVSENR.

At Lys-185 the chain carries N6-(pyridoxal phosphate)lysine.

It belongs to the DegT/DnrJ/EryC1 family. Pyridoxal 5'-phosphate is required as a cofactor.

This is an uncharacterized protein from Methanocaldococcus jannaschii (strain ATCC 43067 / DSM 2661 / JAL-1 / JCM 10045 / NBRC 100440) (Methanococcus jannaschii).